Reading from the N-terminus, the 332-residue chain is L-lactate dehydrogenase A chain (332 aa).

NAD(+) is bound by residues 29-57 and R99; that span reads GAVG…VEDK. Substrate contacts are provided by R106, N138, and R169. Residue N138 coordinates NAD(+). The Proton acceptor role is filled by H193. T248 is a substrate binding site.

This sequence belongs to the LDH/MDH superfamily. LDH family. In terms of assembly, homotetramer.

Its subcellular location is the cytoplasm. The catalysed reaction is (S)-lactate + NAD(+) = pyruvate + NADH + H(+). Its pathway is fermentation; pyruvate fermentation to lactate; (S)-lactate from pyruvate: step 1/1. Interconverts simultaneously and stereospecifically pyruvate and lactate with concomitant interconversion of NADH and NAD(+). The polypeptide is L-lactate dehydrogenase A chain (LDHA) (Caiman crocodilus apaporiensis (Rio Apaporis caiman)).